The following is a 464-amino-acid chain: GTPase Der (464 aa).

2 consecutive EngA-type G domains span residues 3–166 (PVIA…PEVE) and 178–351 (IRIA…DSAF). Residues 9-16 (GRPNVGKS), 56-60 (DTGGL), 118-121 (NKTD), 184-191 (GRPNAGKS), 231-235 (DTAGV), and 296-299 (NKWD) each bind GTP. A KH-like domain is found at 352–436 (IKVSTNHLTK…PIRLEFKTGE (85 aa)).

It belongs to the TRAFAC class TrmE-Era-EngA-EngB-Septin-like GTPase superfamily. EngA (Der) GTPase family. In terms of assembly, associates with the 50S ribosomal subunit.

Its function is as follows. GTPase that plays an essential role in the late steps of ribosome biogenesis. This Thioalkalivibrio sulfidiphilus (strain HL-EbGR7) protein is GTPase Der.